Consider the following 253-residue polypeptide: 5-oxoprolinase subunit A (253 aa).

It belongs to the LamB/PxpA family. As to quaternary structure, forms a complex composed of PxpA, PxpB and PxpC.

The catalysed reaction is 5-oxo-L-proline + ATP + 2 H2O = L-glutamate + ADP + phosphate + H(+). Its function is as follows. Catalyzes the cleavage of 5-oxoproline to form L-glutamate coupled to the hydrolysis of ATP to ADP and inorganic phosphate. The protein is 5-oxoprolinase subunit A of Bacillus thuringiensis subsp. konkukian (strain 97-27).